A 737-amino-acid polypeptide reads, in one-letter code: Catalase-peroxidase (737 aa).

Positions 1–23 (MLKKILPVLITLAIVHNTPTAWA) are cleaved as a signal peptide. The tryptophyl-tyrosyl-methioninium (Trp-Tyr) (with M-249) cross-link spans 102–223 (WHGAGTYRIY…LAATQMGLIY (122 aa)). The active-site Proton acceptor is the histidine 103. Residues 223 to 249 (YVNPEGPNGKPDPVAAAKDIREAFARM) constitute a cross-link (tryptophyl-tyrosyl-methioninium (Tyr-Met) (with W-102)). Histidine 264 serves as a coordination point for heme b.

It belongs to the peroxidase family. Peroxidase/catalase subfamily. In terms of assembly, homodimer or homotetramer. Heme b serves as cofactor. Formation of the three residue Trp-Tyr-Met cross-link is important for the catalase, but not the peroxidase activity of the enzyme.

The catalysed reaction is H2O2 + AH2 = A + 2 H2O. The enzyme catalyses 2 H2O2 = O2 + 2 H2O. Bifunctional enzyme with both catalase and broad-spectrum peroxidase activity. This chain is Catalase-peroxidase, found in Yersinia pseudotuberculosis serotype I (strain IP32953).